The chain runs to 505 residues: Deoxyguanosinetriphosphate triphosphohydrolase (505 aa).

Positions 66–273 (RLTHSMEVQQ…MEAADDISYC (208 aa)) constitute an HD domain.

Belongs to the dGTPase family. Type 1 subfamily. In terms of assembly, homotetramer. The cofactor is Mg(2+).

The catalysed reaction is dGTP + H2O = 2'-deoxyguanosine + triphosphate + H(+). Its activity is regulated as follows. Inhibited by the action of reducing agents such as dithiothreitol and 2-mercaptoethanol. Functionally, dGTPase preferentially hydrolyzes dGTP over the other canonical NTPs. In Shigella boydii, this protein is Deoxyguanosinetriphosphate triphosphohydrolase.